Here is a 257-residue protein sequence, read N- to C-terminus: UPF0246 protein SO_3540 (257 aa).

It belongs to the UPF0246 family.

This is UPF0246 protein SO_3540 from Shewanella oneidensis (strain ATCC 700550 / JCM 31522 / CIP 106686 / LMG 19005 / NCIMB 14063 / MR-1).